The sequence spans 112 residues: Beta-defensin 126 (112 aa).

An N-terminal signal peptide occupies residues 1 to 20 (MKSLLFTLAVFMLLAQLVSG). An in vitro binds to LPS, mediates antimicrobial activity and inhibits LPS-mediated inflammation region spans residues 21–63 (NWYVKKCLNDVGICKKKCKPEELHVKNGRAMCGKQRDCCVPAD). 3 disulfides stabilise this stretch: C27–C58, C34–C52, and C38–C59.

This sequence belongs to the beta-defensin family. In terms of assembly, homodimer or homooligomer; disulfide-linked. O-glycosylated; glycans contain alpha(2,3)-linked sialic acids.

It localises to the secreted. Highly glycosylated atypical beta-defensin involved in several aspects of sperm function. Facilitates sperm transport in the female reproductive tract and contributes to sperm protection against immunodetection; both functions are probably implicating the negative surface charge provided by its O-linked oligosaccharides in the sperm glycocalyx. Involved in binding of sperm to oviductal epithelial cells to form a sperm reservoir until ovulation. Release from the sperm surface during capacitation and ovaluation by an elevation of oviductal fluid pH is unmasking other surface components and allows sperm to penetrate the cumulus matrix and bind to the zona pellucida of the oocyte. In vitro has antimicrobial activity and may inhibit LPS-mediated inflammation. This Hylobates lar (Lar gibbon) protein is Beta-defensin 126 (DEFB126).